The sequence spans 357 residues: tRNA N6-adenosine threonylcarbamoyltransferase (357 aa).

Positions 119 and 123 each coordinate Fe cation. Substrate is bound by residues Leu141–Gly145, Asp174, Gly187, and Asn284. Asp312 is a binding site for Fe cation.

Belongs to the KAE1 / TsaD family. Fe(2+) is required as a cofactor.

It is found in the cytoplasm. The enzyme catalyses L-threonylcarbamoyladenylate + adenosine(37) in tRNA = N(6)-L-threonylcarbamoyladenosine(37) in tRNA + AMP + H(+). Its function is as follows. Required for the formation of a threonylcarbamoyl group on adenosine at position 37 (t(6)A37) in tRNAs that read codons beginning with adenine. Is involved in the transfer of the threonylcarbamoyl moiety of threonylcarbamoyl-AMP (TC-AMP) to the N6 group of A37, together with TsaE and TsaB. TsaD likely plays a direct catalytic role in this reaction. In Pelagibacter ubique (strain HTCC1062), this protein is tRNA N6-adenosine threonylcarbamoyltransferase.